Here is a 314-residue protein sequence, read N- to C-terminus: Nodulation protein D 1 (314 aa).

The HTH lysR-type domain maps to leucine 6–threonine 63. The H-T-H motif DNA-binding region spans leucine 23 to alanine 42.

The protein belongs to the LysR transcriptional regulatory family.

NodD regulates the expression of the nodABCFE genes which encode other nodulation proteins. NodD is also a negative regulator of its own expression. Binds flavonoids as inducers. The sequence is that of Nodulation protein D 1 (nodD1) from Bradyrhizobium sp. (strain NC92).